The primary structure comprises 879 residues: Translation initiation factor IF-2 (879 aa).

Disordered stretches follow at residues alanine 45 to arginine 216 and serine 228 to valine 293. Composition is skewed to basic and acidic residues over residues asparagine 60–serine 72, arginine 83–proline 99, and alanine 107–glutamine 163. The span at methionine 164–glutamine 173 shows a compositional bias: low complexity. Basic and acidic residues-rich tracts occupy residues glutamate 174 to arginine 216, serine 228 to asparagine 271, and arginine 280 to lysine 291. One can recognise a tr-type G domain in the interval valine 380–threonine 549. The segment at glycine 389–threonine 396 is G1. Glycine 389–threonine 396 is a GTP binding site. The G2 stretch occupies residues glycine 414–histidine 418. Residues aspartate 435 to glycine 438 are G3. Residues aspartate 435 to histidine 439 and asparagine 489 to aspartate 492 each bind GTP. The tract at residues asparagine 489–aspartate 492 is G4. Residues serine 525–lysine 527 are G5.

This sequence belongs to the TRAFAC class translation factor GTPase superfamily. Classic translation factor GTPase family. IF-2 subfamily.

It is found in the cytoplasm. One of the essential components for the initiation of protein synthesis. Protects formylmethionyl-tRNA from spontaneous hydrolysis and promotes its binding to the 30S ribosomal subunits. Also involved in the hydrolysis of GTP during the formation of the 70S ribosomal complex. The protein is Translation initiation factor IF-2 of Dichelobacter nodosus (strain VCS1703A).